We begin with the raw amino-acid sequence, 267 residues long: Cell division protein FtsQ (267 aa).

Residues 1 to 32 lie on the Cytoplasmic side of the membrane; the sequence is MRQKTISNKNKQTKNTNNISLRRKLGLMYKKA. The chain crosses the membrane as a helical span at residues 33-53; it reads ILVLKIVLMIFVCLFVFTKYF. Topologically, residues 54 to 267 are periplasmic; the sequence is TSIKTYLITN…DRNKYYIQKY (214 aa). In terms of domain architecture, POTRA spans 73–141; sequence FRLENVIIEG…NTVYIKLFER (69 aa).

It belongs to the FtsQ/DivIB family. FtsQ subfamily.

It localises to the cell inner membrane. In terms of biological role, essential cell division protein. This chain is Cell division protein FtsQ, found in Rickettsia prowazekii (strain Madrid E).